The following is a 70-amino-acid chain: Large ribosomal subunit protein uL29 (70 aa).

This sequence belongs to the universal ribosomal protein uL29 family.

The polypeptide is Large ribosomal subunit protein uL29 (Gloeobacter violaceus (strain ATCC 29082 / PCC 7421)).